We begin with the raw amino-acid sequence, 21 residues long: Venom nerve growth factor Bco12 (21 aa).

Belongs to the NGF-beta family. As to quaternary structure, homodimer; non-covalently linked. Post-translationally, glycosylated. As to expression, expressed by the venom gland.

The protein resides in the secreted. Functionally, nerve growth factor is important for the development and maintenance of the sympathetic and sensory nervous systems. It stimulates division and differentiation of sympathetic and embryonic sensory neurons as well as basal forebrain cholinergic neurons in the brain. Its relevance in the snake venom is not clear. However, it has been shown to inhibit metalloproteinase-dependent proteolysis of platelet glycoprotein Ib alpha, suggesting a metalloproteinase inhibition to prevent metalloprotease autodigestion and/or protection against prey proteases. Binds a lipid between the two protein chains in the homodimer. The lipid-bound form promotes histamine relase from mouse mast cells, contrary to the lipid-free form. The protein is Venom nerve growth factor Bco12 of Bothrops cotiara (Cotiara).